A 228-amino-acid polypeptide reads, in one-letter code: Sodium channel regulatory subunit beta-4 (228 aa).

A signal peptide spans methionine 1 to serine 30. An Ig-like C2-type domain is found at leucine 31–phenylalanine 148. Over leucine 31 to threonine 161 the chain is Extracellular. Residues asparagine 45, asparagine 71, asparagine 113, and asparagine 142 are each glycosylated (N-linked (GlcNAc...) asparagine). Cysteine 53 and cysteine 131 form a disulfide bridge. The chain crosses the membrane as a helical span at residues valine 162–leucine 182. Residues leucine 183–valine 228 lie on the Cytoplasmic side of the membrane. The segment at lysine 199–valine 228 is disordered. Over residues valine 203–asparagine 213 the composition is skewed to polar residues. The span at lysine 219–valine 228 shows a compositional bias: basic and acidic residues.

It belongs to the sodium channel auxiliary subunit SCN4B (TC 8.A.17) family. In terms of assembly, a voltage-gated sodium (Nav) channel consists of an ion-conducting pore-forming alpha subunit functional on its own that is regulated by one or more beta subunits. The beta subunit SCN4B is disulfide-linked to the pore-forming alpha subunit. Interacts with SCN1A; regulatory subunit of SCN1A/Nav1.1. Interacts with SCN2A; regulatory subunit of SCN2A/Nav1.2. Post-translationally, contains an interchain disulfide bond with SCN2A.

The protein resides in the cell membrane. Regulatory subunit of multiple voltage-gated sodium (Nav) channels directly mediating the depolarization of excitable membranes. Navs, also called VGSCs (voltage-gated sodium channels) or VDSCs (voltage-dependent sodium channels), operate by switching between closed and open conformations depending on the voltage difference across the membrane. In the open conformation they allow Na(+) ions to selectively pass through the pore, along their electrochemical gradient. The influx of Na+ ions provokes membrane depolarization, initiating the propagation of electrical signals throughout cells and tissues. The accessory beta subunits participate in localization and functional modulation of the Nav channels. Modulates the activity of SCN1A/Nav1.1. Modulates the activity of SCN2A/Nav1.2. The protein is Sodium channel regulatory subunit beta-4 of Mus musculus (Mouse).